Here is a 202-residue protein sequence, read N- to C-terminus: ATP-dependent Clp protease proteolytic subunit (202 aa).

S101 functions as the Nucleophile in the catalytic mechanism. H126 is a catalytic residue.

The protein belongs to the peptidase S14 family. As to quaternary structure, component of the chloroplastic Clp protease core complex.

It localises to the plastid. The protein localises to the chloroplast stroma. It catalyses the reaction Hydrolysis of proteins to small peptides in the presence of ATP and magnesium. alpha-casein is the usual test substrate. In the absence of ATP, only oligopeptides shorter than five residues are hydrolyzed (such as succinyl-Leu-Tyr-|-NHMec, and Leu-Tyr-Leu-|-Tyr-Trp, in which cleavage of the -Tyr-|-Leu- and -Tyr-|-Trp bonds also occurs).. In terms of biological role, cleaves peptides in various proteins in a process that requires ATP hydrolysis. Has a chymotrypsin-like activity. Plays a major role in the degradation of misfolded proteins. This chain is ATP-dependent Clp protease proteolytic subunit, found in Illicium oligandrum (Star anise).